We begin with the raw amino-acid sequence, 507 residues long: Phosphoprotein (507 aa).

The interval 1-48 (MAEEQARHVKNGLECIRALKAEPIGSLAIEEAMAAWSEISDNPGQERA) is interaction with N0. 4 disordered regions span residues 41–99 (DNPG…PPRN), 134–163 (GLDG…TEGY), 201–231 (NNFP…IKKG), and 250–273 (GATQ…GNVP). S86 is modified (phosphoserine). Positions 134 to 145 (GLDGDSTLSGGD) are enriched in low complexity. The span at 146–160 (NESENSDVDIGEPDT) shows a compositional bias: acidic residues. Position 151 is a phosphoserine (S151). Residues 260-270 (SEPSGPGAPAG) show a composition bias toward low complexity. The segment at 304-376 (GDYYDDELFS…LSSIMIAIPG (73 aa)) is multimerization. 2 interaction with the L polymerase regions span residues 361–377 (STLE…IPGL) and 396–410 (PIIG…AEVL). A x domain (XD) region spans residues 457-507 (GPASRSVIRSIIKSSRLEEDRKRYLMTLLDDIKGANDLAKFHQMLMKIIMK). The interaction with the nucleocapsid (N-RNA) stretch occupies residues 459-507 (ASRSVIRSIIKSSRLEEDRKRYLMTLLDDIKGANDLAKFHQMLMKIIMK).

This sequence belongs to the morbillivirus P protein family. In terms of assembly, homotetramer. Interacts (via multimerization domain and XD domain) with polymerase L; this interaction forms the polymerase L-P complex. Interacts (via N-terminus) with N0 (via Ncore); this interaction allows P to chaperon N0 to avoid N polymerization and non-specific RNA binding before encapsidation. Interacts (via C-terminus) with N-RNA template (via Ntail); this interaction maintains the P/L complex anchored to the nucleocapsid template during the sequential transcription. Interacts (via C-terminus) with protein C this interaction allows C to associate with the ribonucleocapsid. Phosphorylation on serines by host CK2 is necessary for the formation of viral factories.

In terms of biological role, essential cofactor of the RNA polymerase L that plays a central role in the transcription and replication by forming the polymerase complex with RNA polymerase L and recruiting L to the genomic N-RNA template for RNA synthesis. Also plays a central role in the encapsidation of nascent RNA chains by forming the encapsidation complex with the nucleocapsid protein N (N-P complex). Acts as a chaperone for newly synthesized free N protein, so-called N0, allowing encapsidation of nascent RNA chains during replication. The nucleoprotein protein N prevents excessive phosphorylation of P, which leads to down-regulation of viral transcription/ replication. Participates, together with N, in the formation of viral factories (viroplasms), which are large inclusions in the host cytoplasm where replication takes place. The protein is Phosphoprotein (P/V) of Measles virus (strain Edmonston) (MeV).